Reading from the N-terminus, the 256-residue chain is Thiazole synthase (256 aa).

The Schiff-base intermediate with DXP role is filled by Lys-96. 1-deoxy-D-xylulose 5-phosphate-binding positions include Gly-157, 183-184, and 205-206; these read AG and NT.

It belongs to the ThiG family. Homotetramer. Forms heterodimers with either ThiH or ThiS.

It is found in the cytoplasm. It catalyses the reaction [ThiS sulfur-carrier protein]-C-terminal-Gly-aminoethanethioate + 2-iminoacetate + 1-deoxy-D-xylulose 5-phosphate = [ThiS sulfur-carrier protein]-C-terminal Gly-Gly + 2-[(2R,5Z)-2-carboxy-4-methylthiazol-5(2H)-ylidene]ethyl phosphate + 2 H2O + H(+). The protein operates within cofactor biosynthesis; thiamine diphosphate biosynthesis. Functionally, catalyzes the rearrangement of 1-deoxy-D-xylulose 5-phosphate (DXP) to produce the thiazole phosphate moiety of thiamine. Sulfur is provided by the thiocarboxylate moiety of the carrier protein ThiS. In vitro, sulfur can be provided by H(2)S. In Bacillus cereus (strain ATCC 10987 / NRS 248), this protein is Thiazole synthase.